The sequence spans 760 residues: ATP-dependent RNA helicase dbp7 (760 aa).

Positions 23 to 34 are enriched in basic and acidic residues; that stretch reads KLKGGTWRDRLS. The segment at 23-129 is disordered; sequence KLKGGTWRDR…EPVEDAKPTN (107 aa). Residues 38-47 show a composition bias toward basic residues; sequence IAQHRTKNPR. Polar residues predominate over residues 58 to 72; it reads KGPQNPNRIQVSSSR. Positions 77–94 are enriched in basic and acidic residues; that stretch reads QKTDADGDNEKSRHDNKQ. Positions 99-110 are enriched in polar residues; it reads FVSSLFSKNPTP. Positions 137-166 match the Q motif motif; sequence DTFTNLGLSPSLAAHLLTKLELKAPTGIQK. Residues 170–372 enclose the Helicase ATP-binding domain; that stretch reads SQLLKEDSDA…EISLKDAVHI (203 aa). 183 to 190 is a binding site for ATP; it reads AETGSGKT. The DEAD box signature appears at 308–311; the sequence is DEGD. A Helicase C-terminal domain is found at 396–609; the sequence is QLKQSYAIVA…LTRTTAEDIL (214 aa). Disordered stretches follow at residues 453–490 and 692–760; these read YRDESEDEDEEKEDDDEDNSKTKSEASPHGTIAPAVAF and SKIN…FNLA. Acidic residues predominate over residues 456–470; sequence ESEDEDEEKEDDDED. Over residues 701-716 the composition is skewed to basic and acidic residues; sequence PGDKEAKKDYKAERNT. Positions 731 to 740 are enriched in polar residues; the sequence is QPSNDATSAA.

The protein belongs to the DEAD box helicase family. DDX31/DBP7 subfamily.

The protein localises to the nucleus. Its subcellular location is the nucleolus. The enzyme catalyses ATP + H2O = ADP + phosphate + H(+). In terms of biological role, ATP-binding RNA helicase involved in the biogenesis of 60S ribosomal subunits and is required for the normal formation of 25S and 5.8S rRNAs. This is ATP-dependent RNA helicase dbp7 (dbp7) from Aspergillus oryzae (strain ATCC 42149 / RIB 40) (Yellow koji mold).